The sequence spans 295 residues: NAD kinase (295 aa).

The active-site Proton acceptor is the Asp72. NAD(+)-binding positions include 72-73, 146-147, Arg157, Lys174, Asp176, 187-192, and Gln247; these read DG, ND, and TAYALS.

Belongs to the NAD kinase family. A divalent metal cation is required as a cofactor.

The protein localises to the cytoplasm. The enzyme catalyses NAD(+) + ATP = ADP + NADP(+) + H(+). In terms of biological role, involved in the regulation of the intracellular balance of NAD and NADP, and is a key enzyme in the biosynthesis of NADP. Catalyzes specifically the phosphorylation on 2'-hydroxyl of the adenosine moiety of NAD to yield NADP. The chain is NAD kinase from Ectopseudomonas mendocina (strain ymp) (Pseudomonas mendocina).